A 233-amino-acid polypeptide reads, in one-letter code: Zinc import ATP-binding protein ZnuC (233 aa).

An ABC transporter domain is found at 6–222 (IEFRNVSKKF…SEFSNALSAL (217 aa)). Residue 38 to 45 (GPNGAGKT) coordinates ATP.

The protein belongs to the ABC transporter superfamily. Zinc importer (TC 3.A.1.15.5) family. As to quaternary structure, the complex is composed of two ATP-binding proteins (ZnuC), two transmembrane proteins (ZnuB) and a solute-binding protein (ZnuA).

Its subcellular location is the cell inner membrane. The enzyme catalyses Zn(2+)(out) + ATP(in) + H2O(in) = Zn(2+)(in) + ADP(in) + phosphate(in) + H(+)(in). In terms of biological role, part of the ABC transporter complex ZnuABC involved in zinc import. Responsible for energy coupling to the transport system. The protein is Zinc import ATP-binding protein ZnuC of Rickettsia conorii (strain ATCC VR-613 / Malish 7).